The primary structure comprises 563 residues: Serine/threonine-protein kinase WNK8 (563 aa).

Residues Ile29–Leu286 form the Protein kinase domain. ATP is bound by residues Thr109–Phe112 and Lys159. Catalysis depends on Asp176, which acts as the Proton acceptor. Residues Thr426–Arg436 are compositionally biased toward polar residues. The interval Thr426–Gly459 is disordered. Ser509 carries the phosphoserine modification.

Belongs to the protein kinase superfamily. Ser/Thr protein kinase family. WNK subfamily. Interacts with RGS1 and GB1, but not with GPA1. The association with RGS1 at the plasma membrane is triggered by induction of glucose. Binds to EDM2 in nucleus. Post-translationally, autophosphorylated.

The protein localises to the nucleus. The catalysed reaction is L-seryl-[protein] + ATP = O-phospho-L-seryl-[protein] + ADP + H(+). The enzyme catalyses L-threonyl-[protein] + ATP = O-phospho-L-threonyl-[protein] + ADP + H(+). Functionally, regulates flowering time by modulating the photoperiod pathway. Phosphorylates the vacuolar ATPase subunit C (VATC) and RGS1. Regulates EDM2 that, in turn, modulates development processes. The protein is Serine/threonine-protein kinase WNK8 (WNK8) of Arabidopsis thaliana (Mouse-ear cress).